The following is a 321-amino-acid chain: MSVNLDGSEEKMELKKHVPYILNGELYRIEKQVGDNVTVKCCYCPPDRIYRGSVRSTGNFHMHIKRRHSSLLGKLHEMKVAALEERRDRIMKNRRFAKSRKKAPVAVAATSTAAQSDSGVFVDMQAAVPSGNESHELKIKTVFQRHKQEQEGATRKLEDSTSDKANLPNIPKNLGIVVQNVSNISVETLPGGSTPASVSFLGRPVKPEQGSGPSFLADQPAAIDLSQVPPVQGESKSSGSLASSMEDVSMEYSRSQALSQSLSMAHFLEHPQRDVLQRLERSMAQISQELHCRNRIEHNRMLLEAAKFKFLNPNFQFEPNL.

Coiled-coil stretches lie at residues 74–103 (KLHE…RKKA) and 147–167 (KQEQ…KANL). The span at 146 to 162 (HKQEQEGATRKLEDSTS) shows a compositional bias: basic and acidic residues. 2 disordered regions span residues 146 to 166 (HKQE…DKAN) and 227 to 248 (QVPP…MEDV). The segment covering 235–244 (SKSSGSLASS) has biased composition (low complexity). Residues 272 to 292 (QRDVLQRLERSMAQISQELHC) are a coiled coil.

In terms of tissue distribution, germ cells specific. Expressed in all germ cells. During the first instar larvae, it is expressed in all germ cells of both sexes. In third instar larvae, it decreases in male germ cells while it remains in female germ cells. In adult ovary, it is expressed in cells of the germarium, including the stem cells. In the early previtellogenic stages, it is highly expressed in the nurse cells. During vitellogenesis, it is not translocated into the maturing egg. In testes, it is only expressed during some steps of male germline differentiation. At the apex testis, it is expressed at low level in stem cells and dividing spermatogonia, while in newly formed 16-cell cysts of primary spermatocytes, it is transiently but strongly expressed before vanishing during spermatocyte growth phase.

The protein resides in the nucleus. Functionally, essential in the female germline for proper survival, sex determination and differentiation. Participates in the transcriptional activation of Otu. Does not regulate the expression of Ovo. This Drosophila melanogaster (Fruit fly) protein is Protein stand still (stil).